A 134-amino-acid chain; its full sequence is MISSKPSKQRKLVYNLPNHLRYKLLTARLSEDLEKQYGIKRISIRKGDSVKLMRGSQVGYEGKVVEVDRKRGRVAIEGLTKKKADGTPVYVWVHASKVIITKLDTGDKERMDAIERKRKMREEYFSKKSPKEVS.

It belongs to the universal ribosomal protein uL24 family. In terms of assembly, part of the 50S ribosomal subunit.

Functionally, one of two assembly initiator proteins, it binds directly to the 5'-end of the 23S rRNA, where it nucleates assembly of the 50S subunit. Located at the polypeptide exit tunnel on the outside of the subunit. In Sulfolobus acidocaldarius (strain ATCC 33909 / DSM 639 / JCM 8929 / NBRC 15157 / NCIMB 11770), this protein is Large ribosomal subunit protein uL24.